The chain runs to 612 residues: MSAVSQPQAAHAPLEKPASTAILCNTCGNVCKGEVLRVQNKYFHIRCFVCKACGCDLAEGGFFVRQGEHICTRDYQRLYGTRCFSCDRFIEGEVVSALGKTYHPDCFVCAVCRLPFPPGDRVTFNGKECMCQKCSPPTLLGNSAHVAQGLRSCGGCGLEIKNGQALVALDKHWHLGCFKCKTCGKLLNAEYISKDGLPYCEADYHSKFGIRCDGCEKYITGRVLEAGEKHYHPSCALCVRCGQMFSEGEEMYLQGSSIWHPACRQAARTEDKSKETRTSSESIVSVPASSTSGSPSRVIYAKLGDEILDYRDLAALPKNKAIYNIDRPDMISYSPYISHSAVGDRQSYGEGDQDDRSYKQCRTSSPSSAGSVSLGHYTPTSRSPQHYSRPGSESGRSTPSLSVHSDSRPPSSTYQQAPRHFHVPDTGVKDNIYRKPPIYKQHAARRLDVEDSSFDQDSRKKTTWLLLKGDADTRTNSPDLDSQSLSLSSGTDQEPLQRMAGDSLYSRFPYSKPDTLPGPRKDGLDLRNANLAPCGADPDASWGTREYKIYPYDSLIVTNRIRVKLPKDVDRTRLERHLSPEEFQEVFGMSIEEFDRLALWKRNDLKKKALLF.

4 LIM zinc-binding domains span residues 22–81 (ILCN…LYGT), 81–141 (TRCF…TLLG), 151–210 (RSCG…KFGI), and 210–270 (IRCD…ARTE). Zn(2+)-binding residues include C83, C86, H103, C106, C109, C112, C131, and C134. The Zn(2+) site is built by C212, C215, H232, C235, C238, C241, H260, and C263. Residues 269 to 278 (TEDKSKETRT) are compositionally biased toward basic and acidic residues. Disordered regions lie at residues 269–295 (TEDKSKETRTSSESIVSVPASSTSGSP) and 341–433 (AVGD…DNIY). Residues 279–295 (SSESIVSVPASSTSGSP) are compositionally biased toward low complexity. Residues S282, S294, G351, R356, S365, and S368 each carry the phosphoserine modification. Residues 364–373 (SSPSSAGSVS) are compositionally biased toward low complexity. Polar residues predominate over residues 394–416 (SGRSTPSLSVHSDSRPPSSTYQQ). Position 453 is a phosphoserine (S453). A disordered region spans residues 471–498 (ADTRTNSPDLDSQSLSLSSGTDQEPLQR). At T473 the chain carries Phosphothreonine. 2 positions are modified to phosphoserine: S477 and S579. Low complexity predominate over residues 477–489 (SPDLDSQSLSLSS). The HP domain occupies 544-612 (TREYKIYPYD…NDLKKKALLF (69 aa)).

Interacts with F-actin and ABRA. Expressed in brain. Highly expressed in caudate/putamen, moderately expressed in the olfactory bulb. In the hippocampus, expressed in the CA1, CA2 and CA3 fields. In the cerebellum, expressed in Purkinje cells.

It localises to the cytoplasm. Its function is as follows. May act as scaffold protein. May stimulate ABRA activity and ABRA-dependent SRF transcriptional activity. In Mus musculus (Mouse), this protein is Actin-binding LIM protein 2 (Ablim2).